A 475-amino-acid chain; its full sequence is Bifunctional protein HldE (475 aa).

Residues 1 to 317 (MQYSAQFNRA…ENAIHGRTTA (317 aa)) are ribokinase. Residue 194-197 (NMSE) participates in ATP binding. Residue aspartate 263 is part of the active site. The tract at residues 343-475 (MTNGCFDILH…VIKKIQQLKE (133 aa)) is cytidylyltransferase.

In the N-terminal section; belongs to the carbohydrate kinase PfkB family. The protein in the C-terminal section; belongs to the cytidylyltransferase family. As to quaternary structure, homodimer.

The enzyme catalyses D-glycero-beta-D-manno-heptose 7-phosphate + ATP = D-glycero-beta-D-manno-heptose 1,7-bisphosphate + ADP + H(+). The catalysed reaction is D-glycero-beta-D-manno-heptose 1-phosphate + ATP + H(+) = ADP-D-glycero-beta-D-manno-heptose + diphosphate. The protein operates within nucleotide-sugar biosynthesis; ADP-L-glycero-beta-D-manno-heptose biosynthesis; ADP-L-glycero-beta-D-manno-heptose from D-glycero-beta-D-manno-heptose 7-phosphate: step 1/4. Its pathway is nucleotide-sugar biosynthesis; ADP-L-glycero-beta-D-manno-heptose biosynthesis; ADP-L-glycero-beta-D-manno-heptose from D-glycero-beta-D-manno-heptose 7-phosphate: step 3/4. Functionally, catalyzes the phosphorylation of D-glycero-D-manno-heptose 7-phosphate at the C-1 position to selectively form D-glycero-beta-D-manno-heptose-1,7-bisphosphate. Its function is as follows. Catalyzes the ADP transfer from ATP to D-glycero-beta-D-manno-heptose 1-phosphate, yielding ADP-D-glycero-beta-D-manno-heptose. This chain is Bifunctional protein HldE, found in Histophilus somni (strain 129Pt) (Haemophilus somnus).